The chain runs to 710 residues: Cyclomaltodextrin glucanotransferase (710 aa).

The signal sequence occupies residues 1-27 (MKKTFKLILVLMLSLTLVFGLTAPIQA). Asp-54, Asn-56, Asn-59, Asn-60, Gly-78, and Asp-80 together coordinate Ca(2+). 128-129 (YW) serves as a coordination point for substrate. Asn-167 lines the Ca(2+) pocket. Residue His-168 coordinates substrate. A Ca(2+)-binding site is contributed by Ile-218. Substrate is bound at residue 221 to 224 (NLFD). Asp-227 is a binding site for Ca(2+). Position 255 (Arg-255) interacts with substrate. Catalysis depends on Asp-257, which acts as the Nucleophile. 260-261 (KH) contacts substrate. His-261 contributes to the Ca(2+) binding site. The Proton donor role is filled by Glu-285. The substrate site is built by His-355, Asp-398, and Arg-402. The 78-residue stretch at 526 to 603 (PLIGHVGPTM…GATSNTYNNI (78 aa)) folds into the IPT/TIG domain. The CBM20 domain maps to 605–710 (ILTGNQICVR…TGTVIVNWQQ (106 aa)).

Belongs to the glycosyl hydrolase 13 family. Requires Ca(2+) as cofactor.

It localises to the secreted. The enzyme catalyses Cyclizes part of a (1-&gt;4)-alpha-D-glucan chain by formation of a (1-&gt;4)-alpha-D-glucosidic bond.. In terms of biological role, degrades starch to alpha-, beta-, and gamma-cyclodextrins, as well as linear sugars. The sequence is that of Cyclomaltodextrin glucanotransferase (amyA) from Thermoanaerobacterium thermosulfurigenes (Clostridium thermosulfurogenes).